Consider the following 444-residue polypeptide: Type VII secretion system protein EssB (444 aa).

Topologically, residues 1–229 (MVKNHNPKNE…RKVGHTVFKW (229 aa)) are cytoplasmic. The helical transmembrane segment at 230 to 250 (VAIGMTTLSVLLIAFLAFLYF) threads the bilayer. Topologically, residues 251 to 444 (SVMKHNERIE…EKRQEAERKK (194 aa)) are extracellular. The tract at residues 366-444 (KNNGDLSNDK…EKRQEAERKK (79 aa)) is disordered. Over residues 372–444 (SNDKRSEETK…EKRQEAERKK (73 aa)) the composition is skewed to basic and acidic residues. The stretch at 387–443 (LQDILDKEKQVKDEKAKSEEEKAKAKDEKLKQQEENEKKQKEQAQKDKEKRQEAERK) forms a coiled coil.

The protein belongs to the EssB family. In terms of assembly, may oligomerize and interact with other membrane components to form the Ess system. Interacts with EsaA.

It is found in the cell membrane. Functionally, component of the type VII secretion system (Ess). Required for the secretion of EsxA and proper accumulation of EssB and EssD. The chain is Type VII secretion system protein EssB from Staphylococcus aureus (strain USA300).